The primary structure comprises 79 residues: DNA-directed RNA polymerase subunit omega (79 aa).

This sequence belongs to the RNA polymerase subunit omega family. In terms of assembly, in cyanobacteria the RNAP catalytic core is composed of 2 alpha, 1 beta, 1 beta', 1 gamma and 1 omega subunit. When a sigma factor is associated with the core the holoenzyme is formed, which can initiate transcription.

It catalyses the reaction RNA(n) + a ribonucleoside 5'-triphosphate = RNA(n+1) + diphosphate. Functionally, promotes RNA polymerase assembly. Latches the N- and C-terminal regions of the beta' subunit thereby facilitating its interaction with the beta and alpha subunits. This is DNA-directed RNA polymerase subunit omega from Synechococcus sp. (strain JA-2-3B'a(2-13)) (Cyanobacteria bacterium Yellowstone B-Prime).